A 589-amino-acid chain; its full sequence is Transmembrane 9 superfamily member 1 (589 aa).

Residues 1 to 27 (MTVLGHPRSWSCHCLPVLILLLGIGHG) form the signal peptide. A glycan (N-linked (GlcNAc...) asparagine) is linked at Asn178. A run of 4 helical transmembrane segments spans residues 237–257 (LSII…AVIL), 310–330 (VLGV…MALL), 339–359 (GAIN…SGYV), and 373–393 (VWNI…TWSV). Residue Asn401 is glycosylated (N-linked (GlcNAc...) asparagine). Transmembrane regions (helical) follow at residues 412 to 432 (ILLL…IGGI), 482 to 502 (GILF…SIAL), and 518 to 538 (SVLS…FYYA). N-linked (GlcNAc...) asparagine glycosylation is present at Asn542. A helical transmembrane segment spans residues 552–572 (FFGYSLLTGYVFFLMLGTISF).

It belongs to the nonaspanin (TM9SF) (TC 9.A.2) family.

The protein resides in the lysosome membrane. It is found in the cytoplasmic vesicle. It localises to the autophagosome membrane. Its function is as follows. Plays an essential role in autophagy. The chain is Transmembrane 9 superfamily member 1 (Tm9sf1) from Rattus norvegicus (Rat).